A 101-amino-acid chain; its full sequence is Transcription factor ILI2 (101 aa).

The segment at 1 to 22 (MSSSRRSRTSSRLAAAPPPTDE) is disordered. The 56-residue stretch at 8–63 (RTSSRLAAAPPPTDEQMAELISKLQAVLPTRGGEANAKQASSAEVLQEACRYIRRL) folds into the bHLH domain.

It belongs to the bHLH protein family.

Atypical and probable non DNA-binding bHLH transcription factor that integrates multiple signaling pathways to regulate cell elongation and plant development. This chain is Transcription factor ILI2 (ILI2), found in Oryza sativa subsp. indica (Rice).